Here is a 294-residue protein sequence, read N- to C-terminus: uncharacterized protein (294 aa).

Disordered regions lie at residues 25–59 (VQVY…RVRR) and 77–141 (LKDD…FEAP). Residues 86 to 139 (YEELEDDDDDESIEEESDSEFEGESSSDEEESSYDSDSDYDSETEPEDSDDDFE) are compositionally biased toward acidic residues. Residues 201–234 (IKFYKRNTTFTEEELAEIEEDLLAEVKARYNNMK) adopt a coiled-coil conformation. Positions 242–259 (TIETTEDDKKAGEVNKYD) are enriched in basic and acidic residues. The segment at 242-294 (TIETTEDDKKAGEVNKYDIDDDFIEKTESDEEEEITEDDSSEQETVVVEPVDE) is disordered. Over residues 260 to 283 (IDDDFIEKTESDEEEEITEDDSSE) the composition is skewed to acidic residues.

This is an uncharacterized protein from Magallana gigas (Pacific oyster).